Consider the following 147-residue polypeptide: Flagellar assembly factor FliW (147 aa).

The protein belongs to the FliW family. In terms of assembly, interacts with translational regulator CsrA and flagellin(s).

It localises to the cytoplasm. Functionally, acts as an anti-CsrA protein, binds CsrA and prevents it from repressing translation of its target genes, one of which is flagellin. Binds to flagellin and participates in the assembly of the flagellum. The sequence is that of Flagellar assembly factor FliW from Chromobacterium violaceum (strain ATCC 12472 / DSM 30191 / JCM 1249 / CCUG 213 / NBRC 12614 / NCIMB 9131 / NCTC 9757 / MK).